We begin with the raw amino-acid sequence, 99 residues long: CLAVATA3/ESR (CLE)-related protein 17 (99 aa).

The signal sequence occupies residues M1–M21. The segment covering L77–V89 has biased composition (basic and acidic residues). The tract at residues L77–N99 is disordered. Position 94 is a hydroxyproline (P94). P94 carries an O-linked (Ara...) hydroxyproline glycan.

Belongs to the CLV3/ESR signal peptide family. Post-translationally, the O-glycosylation (arabinosylation) of the hydroxyproline Pro-94 enhances binding affinity of the CLE17p peptide for its receptor. As to expression, mostly expressed in seedlings, roots, flowers, stems and apex, and, to a lower extent, in leaves and siliques.

The protein localises to the secreted. It localises to the extracellular space. Its function is as follows. Extracellular signal peptide that regulates cell fate. Represses root apical meristem maintenance. Regulates the transition of protophloem cells from proliferation to differentiation, thus impinging on postembryonic growth capacity of the root meristem; this signaling pathway requires CRN and CLV2. The protein is CLAVATA3/ESR (CLE)-related protein 17 of Arabidopsis thaliana (Mouse-ear cress).